The primary structure comprises 500 residues: Probable glycine dehydrogenase (decarboxylating) subunit 2 (500 aa).

The residue at position 273 (lysine 273) is an N6-(pyridoxal phosphate)lysine.

This sequence belongs to the GcvP family. C-terminal subunit subfamily. The glycine cleavage system is composed of four proteins: P, T, L and H. In this organism, the P 'protein' is a heterodimer of two subunits. Requires pyridoxal 5'-phosphate as cofactor.

It catalyses the reaction N(6)-[(R)-lipoyl]-L-lysyl-[glycine-cleavage complex H protein] + glycine + H(+) = N(6)-[(R)-S(8)-aminomethyldihydrolipoyl]-L-lysyl-[glycine-cleavage complex H protein] + CO2. Its function is as follows. The glycine cleavage system catalyzes the degradation of glycine. The P protein binds the alpha-amino group of glycine through its pyridoxal phosphate cofactor; CO(2) is released and the remaining methylamine moiety is then transferred to the lipoamide cofactor of the H protein. This chain is Probable glycine dehydrogenase (decarboxylating) subunit 2, found in Rhodopirellula baltica (strain DSM 10527 / NCIMB 13988 / SH1).